A 699-amino-acid polypeptide reads, in one-letter code: Elongation factor G (699 aa).

Positions 8–286 (EKLRNIGIVA…AVIVTYPLPI (279 aa)) constitute a tr-type G domain. GTP contacts are provided by residues 17 to 24 (AHIDAGKT), 84 to 88 (DTPGH), and 138 to 141 (NKMD).

This sequence belongs to the TRAFAC class translation factor GTPase superfamily. Classic translation factor GTPase family. EF-G/EF-2 subfamily.

The protein localises to the cytoplasm. In terms of biological role, catalyzes the GTP-dependent ribosomal translocation step during translation elongation. During this step, the ribosome changes from the pre-translocational (PRE) to the post-translocational (POST) state as the newly formed A-site-bound peptidyl-tRNA and P-site-bound deacylated tRNA move to the P and E sites, respectively. Catalyzes the coordinated movement of the two tRNA molecules, the mRNA and conformational changes in the ribosome. This is Elongation factor G (fusA) from Aquifex pyrophilus.